Consider the following 121-residue polypeptide: Small ribosomal subunit protein uS13 (121 aa).

A disordered region spans residues 91–121; sequence HKRGLPVRGQRTRTNARTRKGPRRAAASLKK.

The protein belongs to the universal ribosomal protein uS13 family. Part of the 30S ribosomal subunit. Forms a loose heterodimer with protein S19. Forms two bridges to the 50S subunit in the 70S ribosome.

In terms of biological role, located at the top of the head of the 30S subunit, it contacts several helices of the 16S rRNA. In the 70S ribosome it contacts the 23S rRNA (bridge B1a) and protein L5 of the 50S subunit (bridge B1b), connecting the 2 subunits; these bridges are implicated in subunit movement. Contacts the tRNAs in the A and P-sites. The sequence is that of Small ribosomal subunit protein uS13 from Bordetella avium (strain 197N).